We begin with the raw amino-acid sequence, 302 residues long: ATP synthase gamma chain (302 aa).

It belongs to the ATPase gamma chain family. F-type ATPases have 2 components, CF(1) - the catalytic core - and CF(0) - the membrane proton channel. CF(1) has five subunits: alpha(3), beta(3), gamma(1), delta(1), epsilon(1). CF(0) has three main subunits: a, b and c.

It is found in the cell inner membrane. Produces ATP from ADP in the presence of a proton gradient across the membrane. The gamma chain is believed to be important in regulating ATPase activity and the flow of protons through the CF(0) complex. In Bartonella bacilliformis (strain ATCC 35685 / KC583 / Herrer 020/F12,63), this protein is ATP synthase gamma chain.